We begin with the raw amino-acid sequence, 71 residues long: Large ribosomal subunit protein bL31 (71 aa).

Residues Cys16, Cys18, Cys36, and Cys39 each coordinate Zn(2+).

This sequence belongs to the bacterial ribosomal protein bL31 family. Type A subfamily. In terms of assembly, part of the 50S ribosomal subunit. It depends on Zn(2+) as a cofactor.

Binds the 23S rRNA. The chain is Large ribosomal subunit protein bL31 from Petrotoga mobilis (strain DSM 10674 / SJ95).